The sequence spans 451 residues: Tubulin alpha chain (451 aa).

Glutamine 11 lines the GTP pocket. An N6-acetyllysine modification is found at lysine 40. Residues glutamate 71, glycine 144, threonine 145, threonine 179, asparagine 206, and asparagine 228 each contribute to the GTP site. Glutamate 71 contacts Mg(2+). Residue glutamate 254 is part of the active site.

Belongs to the tubulin family. As to quaternary structure, dimer of alpha and beta chains. A typical microtubule is a hollow water-filled tube with an outer diameter of 25 nm and an inner diameter of 15 nM. Alpha-beta heterodimers associate head-to-tail to form protofilaments running lengthwise along the microtubule wall with the beta-tubulin subunit facing the microtubule plus end conferring a structural polarity. Microtubules usually have 13 protofilaments but different protofilament numbers can be found in some organisms and specialized cells. It depends on Mg(2+) as a cofactor. Undergoes a tyrosination/detyrosination cycle, the cyclic removal and re-addition of a C-terminal tyrosine residue by the enzymes tubulin tyrosine carboxypeptidase (TTCP) and tubulin tyrosine ligase (TTL), respectively. Post-translationally, acetylation of alpha chains at Lys-40 stabilizes microtubules and affects affinity and processivity of microtubule motors. This modification has a role in multiple cellular functions, ranging from cell motility, cell cycle progression or cell differentiation to intracellular trafficking and signaling.

It localises to the cytoplasm. Its subcellular location is the cytoskeleton. It catalyses the reaction GTP + H2O = GDP + phosphate + H(+). Functionally, tubulin is the major constituent of microtubules, a cylinder consisting of laterally associated linear protofilaments composed of alpha- and beta-tubulin heterodimers. Microtubules grow by the addition of GTP-tubulin dimers to the microtubule end, where a stabilizing cap forms. Below the cap, tubulin dimers are in GDP-bound state, owing to GTPase activity of alpha-tubulin. The protein is Tubulin alpha chain (TUBA) of Euglena gracilis.